The chain runs to 702 residues: Protein crooked neck (702 aa).

HAT repeat units lie at residues 56-88 (DYQQ…WEEQ), 90-122 (QEIQ…MEMK), 124-156 (KQVN…MEEM), 158-189 (ENVA…FELR), 191-222 (KEID…FEES), 224-259 (GFIH…FEEG), 261-295 (KEHD…HEKK), 305-337 (VIVS…LIEA), 339-373 (GDRD…LWIN), 383-419 (EDAE…FEIR), 454-486 (REFE…LENL), 488-522 (GDTD…FEVA), and 524-555 (GETE…FEMG). Positions 620–628 (PRRIKKRQK) match the Nuclear localization signal motif. Residues 670-702 (KDNTVDDPPATAIASEPEPAADAAPADTTDSGD) are disordered. Residues 683–702 (ASEPEPAADAAPADTTDSGD) are compositionally biased toward low complexity.

This sequence belongs to the crooked-neck family. As to quaternary structure, colocalizes with a complex containing snRNP proteins. As to expression, transcribed in all cells during embryonic development.

The protein localises to the nucleus speckle. Functionally, may be involved in pre-mRNA splicing process. Involved in embryonic neurogenesis and cell rearrangement during Malpighian tubule morphogenesis. The chain is Protein crooked neck (crn) from Drosophila melanogaster (Fruit fly).